Consider the following 120-residue polypeptide: UPF0102 protein PTH_1707 (120 aa).

Belongs to the UPF0102 family.

This chain is UPF0102 protein PTH_1707, found in Pelotomaculum thermopropionicum (strain DSM 13744 / JCM 10971 / SI).